The chain runs to 130 residues: Large ribosomal subunit protein bL19 (130 aa).

This sequence belongs to the bacterial ribosomal protein bL19 family.

This protein is located at the 30S-50S ribosomal subunit interface and may play a role in the structure and function of the aminoacyl-tRNA binding site. The protein is Large ribosomal subunit protein bL19 of Methylorubrum populi (strain ATCC BAA-705 / NCIMB 13946 / BJ001) (Methylobacterium populi).